Reading from the N-terminus, the 705-residue chain is MNALFASTARGLEELLKSELESLGAQSCAVVQGGVHFEGDNRLLYQSLLWSRLASRILLPLNEFKVHSDLDLYLGVQAIDWSTIFSIDKTFAVHFTGTNEDIRNSQYGALKVKDAIVDSFTRKTGQRPDVAKQQPDIRVNVFLQRDTASVALDLSGEGLHQRGYRDLAGLAPLKENLAAAIVSRSGWQNGTPMVDPMCGSGTLLIEAAMIASDRAPGLHRTHWGFNAWLKHDAELWHELTSEAQQRASQGLQATTSRFFGSDNDRRVIEIAKANARRAGVAELISFGVKDAAQLQNPLPEGPKGTVISNPPYGERLESEPALIALHNMLGRKMKSDFGGWQLSLFSASPELLSCLQLRAERQFKAKNGPLDCVQKNYQLADTQGESAGQIAEDFANRLRKNLRKLEKWAKQQGIECYRIYDADLPEYNVAVDRYGSWVVVQEYAPPKTIDAQKARQRLFDVINATLIVLELPSNRLVLKTRERQKGKNQYEKLAQKGDFLLMEEFGAKLWVNLTDYLDTGLFLDHRIARKMLGEMSRGKDFLNLFAYTGTASVHAGLGGARSTTTVDMSRTYLEWAEKNLRVNGLTGRQHRLIQADCLSWLHNGHEQFDVIFIDPPTFSNSKRMEESFDVQRDHLALMKDLKRLLRRGGTIMFSNNKRGFQMDIAGLTALGLNAKEITAQTQSQDFARNRQIHNCWLLTHAGEEK.

The THUMP domain maps to 43-154 (LLYQSLLWSR…RDTASVALDL (112 aa)).

This sequence belongs to the methyltransferase superfamily. RlmKL family.

The protein resides in the cytoplasm. It carries out the reaction guanosine(2445) in 23S rRNA + S-adenosyl-L-methionine = N(2)-methylguanosine(2445) in 23S rRNA + S-adenosyl-L-homocysteine + H(+). The catalysed reaction is guanosine(2069) in 23S rRNA + S-adenosyl-L-methionine = N(2)-methylguanosine(2069) in 23S rRNA + S-adenosyl-L-homocysteine + H(+). Its function is as follows. Specifically methylates the guanine in position 2445 (m2G2445) and the guanine in position 2069 (m7G2069) of 23S rRNA. This is Ribosomal RNA large subunit methyltransferase K/L from Pectobacterium atrosepticum (strain SCRI 1043 / ATCC BAA-672) (Erwinia carotovora subsp. atroseptica).